Reading from the N-terminus, the 225-residue chain is NAD(P)H-quinone oxidoreductase subunit K, chloroplastic (225 aa).

[4Fe-4S] cluster is bound by residues cysteine 43, cysteine 44, cysteine 108, and cysteine 139.

Belongs to the complex I 20 kDa subunit family. As to quaternary structure, NDH is composed of at least 16 different subunits, 5 of which are encoded in the nucleus. Requires [4Fe-4S] cluster as cofactor.

It localises to the plastid. Its subcellular location is the chloroplast thylakoid membrane. It carries out the reaction a plastoquinone + NADH + (n+1) H(+)(in) = a plastoquinol + NAD(+) + n H(+)(out). The enzyme catalyses a plastoquinone + NADPH + (n+1) H(+)(in) = a plastoquinol + NADP(+) + n H(+)(out). NDH shuttles electrons from NAD(P)H:plastoquinone, via FMN and iron-sulfur (Fe-S) centers, to quinones in the photosynthetic chain and possibly in a chloroplast respiratory chain. The immediate electron acceptor for the enzyme in this species is believed to be plastoquinone. Couples the redox reaction to proton translocation, and thus conserves the redox energy in a proton gradient. This Nandina domestica (Heavenly bamboo) protein is NAD(P)H-quinone oxidoreductase subunit K, chloroplastic.